The sequence spans 466 residues: UDP-N-acetylmuramoylalanine--D-glutamate ligase (466 aa).

ATP is bound at residue Gly121 to Thr127.

The protein belongs to the MurCDEF family.

Its subcellular location is the cytoplasm. It catalyses the reaction UDP-N-acetyl-alpha-D-muramoyl-L-alanine + D-glutamate + ATP = UDP-N-acetyl-alpha-D-muramoyl-L-alanyl-D-glutamate + ADP + phosphate + H(+). It participates in cell wall biogenesis; peptidoglycan biosynthesis. In terms of biological role, cell wall formation. Catalyzes the addition of glutamate to the nucleotide precursor UDP-N-acetylmuramoyl-L-alanine (UMA). The sequence is that of UDP-N-acetylmuramoylalanine--D-glutamate ligase from Nitrobacter hamburgensis (strain DSM 10229 / NCIMB 13809 / X14).